Consider the following 153-residue polypeptide: TM2 domain-containing protein DDB_G0277895 (153 aa).

The 48-residue stretch at 3-50 (QKSVCVTYLLWLFFGLFGIHRFYLNRPCSGVLYLFTCGCFFIGWFIDI) folds into the TM2 domain. Helical transmembrane passes span 6 to 26 (VCVT…RFYL) and 33 to 53 (VLYL…ICLI). The tract at residues 85–153 (GSPQQQPYGA…GNYPPPYGPQ (69 aa)) is disordered. Repeat copies occupy residues 89–96 (QQPYGAPP), 97–104 (QQPYGAPP), 105–112 (QQPYGAPP), 113–120 (QQPYGAPP), 121–128 (QQPYGAPP), and 129–136 (PQPYGAPP). Residues 89-136 (QQPYGAPPQQPYGAPPQQPYGAPPQQPYGAPPQQPYGAPPPQPYGAPP) are 6 X 8 AA tandem repeat of Q-Q-P-Y-G-A-P-P. Residues 93 to 153 (GAPPQQPYGA…GNYPPPYGPQ (61 aa)) are compositionally biased toward pro residues.

Belongs to the TM2 family.

The protein localises to the membrane. This is TM2 domain-containing protein DDB_G0277895 from Dictyostelium discoideum (Social amoeba).